Reading from the N-terminus, the 359-residue chain is DNA polymerase IV (359 aa).

Positions 7 to 188 constitute a UmuC domain; that stretch reads IIHIDMDAFY…IPIGKFFGVG (182 aa). The Mg(2+) site is built by Asp-11 and Asp-106. Glu-107 is an active-site residue.

It belongs to the DNA polymerase type-Y family. In terms of assembly, monomer. The cofactor is Mg(2+).

It localises to the cytoplasm. It carries out the reaction DNA(n) + a 2'-deoxyribonucleoside 5'-triphosphate = DNA(n+1) + diphosphate. Its function is as follows. Poorly processive, error-prone DNA polymerase involved in untargeted mutagenesis. Copies undamaged DNA at stalled replication forks, which arise in vivo from mismatched or misaligned primer ends. These misaligned primers can be extended by PolIV. Exhibits no 3'-5' exonuclease (proofreading) activity. May be involved in translesional synthesis, in conjunction with the beta clamp from PolIII. This Clostridium perfringens (strain ATCC 13124 / DSM 756 / JCM 1290 / NCIMB 6125 / NCTC 8237 / Type A) protein is DNA polymerase IV.